Here is a 193-residue protein sequence, read N- to C-terminus: Ion-translocating oxidoreductase complex subunit A (193 aa).

6 helical membrane passes run 5–25 (LLLL…FLGL), 39–59 (VGMG…SYLM), 63–83 (ILIP…VIAV), 102–122 (LLGI…VALL), 134–154 (IIYG…FAAM), and 171–191 (SIAM…TGLI).

This sequence belongs to the NqrDE/RnfAE family. The complex is composed of six subunits: RnfA, RnfB, RnfC, RnfD, RnfE and RnfG.

The protein resides in the cell inner membrane. Its function is as follows. Part of a membrane-bound complex that couples electron transfer with translocation of ions across the membrane. This chain is Ion-translocating oxidoreductase complex subunit A, found in Aeromonas salmonicida (strain A449).